The primary structure comprises 384 residues: Alanine racemase (384 aa).

The Proton acceptor; specific for D-alanine role is filled by K39. K39 bears the N6-(pyridoxal phosphate)lysine mark. R136 contributes to the substrate binding site. Y265 functions as the Proton acceptor; specific for L-alanine in the catalytic mechanism. Substrate is bound at residue M312.

The protein belongs to the alanine racemase family. It depends on pyridoxal 5'-phosphate as a cofactor.

It carries out the reaction L-alanine = D-alanine. It participates in amino-acid biosynthesis; D-alanine biosynthesis; D-alanine from L-alanine: step 1/1. In terms of biological role, catalyzes the interconversion of L-alanine and D-alanine. May also act on other amino acids. In Geobacillus kaustophilus (strain HTA426), this protein is Alanine racemase (alr).